A 343-amino-acid polypeptide reads, in one-letter code: Protein RecA (343 aa).

68 to 75 is an ATP binding site; it reads GPESSGKT.

The protein belongs to the RecA family.

The protein localises to the cytoplasm. Its function is as follows. Can catalyze the hydrolysis of ATP in the presence of single-stranded DNA, the ATP-dependent uptake of single-stranded DNA by duplex DNA, and the ATP-dependent hybridization of homologous single-stranded DNAs. It interacts with LexA causing its activation and leading to its autocatalytic cleavage. In Syntrophobacter fumaroxidans (strain DSM 10017 / MPOB), this protein is Protein RecA.